We begin with the raw amino-acid sequence, 137 residues long: Regulator of cell cycle RGCC (137 aa).

2 disordered regions span residues 1-20 (MKPP…APAL) and 57-80 (LERM…SESA). Over residues 65–80 (SASVSDSSGFSDSESA) the composition is skewed to low complexity. 6 positions are modified to phosphoserine: serine 67, serine 69, serine 71, serine 75, serine 91, and serine 97. Threonine 111 bears the Phosphothreonine; by CDK1 mark.

As to quaternary structure, interacts with SMAD3. Interacts with CDK1 and PLK1. Detected in brain, heart and liver (at protein level). Highly expressed in liver, skeletal muscle, kidney and pancreas. Detected at lower levels in heart, brain and placenta. Detected in aorta endothelial cells. Overexpressed in colon, breast, prostate, bladder, lung, and ovarian cancer tissues.

It localises to the cytoplasm. The protein localises to the nucleus. The protein resides in the cytoskeleton. It is found in the microtubule organizing center. Its subcellular location is the centrosome. Functionally, modulates the activity of cell cycle-specific kinases. Enhances CDK1 activity. May contribute to the regulation of the cell cycle. May inhibit growth of glioma cells by promoting arrest of mitotic progression at the G2/M transition. Fibrogenic factor contributing to the pathogenesis of renal fibrosis through fibroblast activation. In Homo sapiens (Human), this protein is Regulator of cell cycle RGCC (RGCC).